We begin with the raw amino-acid sequence, 356 residues long: Tyrosine recombinase XerS (356 aa).

Residues 16–121 enclose the Core-binding (CB) domain; it reads VMPPYVLEYY…ALSSLYKYLT (106 aa). In terms of domain architecture, Tyr recombinase spans 169–354; sequence GFLDYIDSEY…INEEQKNALD (186 aa). Residues arginine 210, lysine 234, histidine 306, arginine 309, and histidine 332 contribute to the active site. The active-site O-(3'-phospho-DNA)-tyrosine intermediate is the tyrosine 341.

Belongs to the 'phage' integrase family. XerS subfamily.

It is found in the cytoplasm. FtsK is required for recombination. Functionally, site-specific tyrosine recombinase, which acts by catalyzing the cutting and rejoining of the recombining DNA molecules. Essential to convert dimers of the bacterial chromosome into monomers to permit their segregation at cell division. Binds an atypical recombination dif site (difSL). Binds preferentially to the left arm and cooperatively to the right arm of difSL. This is Tyrosine recombinase XerS from Lactococcus lactis subsp. cremoris (strain MG1363).